A 136-amino-acid chain; its full sequence is MNKLAIEIVTPNGSIYSETEAELIVLQTESGEMGVMAGHIPTVAPLKIGAVRVTKPGNDKDYIAVTEGFAEIRPQQVSVLVQAAEQAEGIDIERAKESLKRAEARLNEDKAAHVDFHRAERALHRAINRIEVAKFR.

It belongs to the ATPase epsilon chain family. As to quaternary structure, F-type ATPases have 2 components, CF(1) - the catalytic core - and CF(0) - the membrane proton channel. CF(1) has five subunits: alpha(3), beta(3), gamma(1), delta(1), epsilon(1). CF(0) has three main subunits: a, b and c.

It localises to the cell membrane. Produces ATP from ADP in the presence of a proton gradient across the membrane. This chain is ATP synthase epsilon chain, found in Macrococcus caseolyticus (strain JCSC5402) (Macrococcoides caseolyticum).